A 250-amino-acid chain; its full sequence is Probable septum site-determining protein MinC (250 aa).

Residues 110–143 (SGARERPLEPEPEVVKKPEPAPAPPPPPEPEVRP) are disordered. The span at 112 to 128 (ARERPLEPEPEVVKKPE) shows a compositional bias: basic and acidic residues. Pro residues predominate over residues 129–138 (PAPAPPPPPE).

The protein belongs to the MinC family. In terms of assembly, interacts with MinD and FtsZ.

Cell division inhibitor that blocks the formation of polar Z ring septums. Rapidly oscillates between the poles of the cell to destabilize FtsZ filaments that have formed before they mature into polar Z rings. Prevents FtsZ polymerization. This chain is Probable septum site-determining protein MinC, found in Pseudomonas putida (strain ATCC 47054 / DSM 6125 / CFBP 8728 / NCIMB 11950 / KT2440).